We begin with the raw amino-acid sequence, 378 residues long: Putative aminoglycoside phosphotransferase (378 aa).

ATP-binding positions include arginine 79 and 134 to 136 (DYV). The active-site Proton acceptor is aspartate 249. 3 residues coordinate Mg(2+): asparagine 254, aspartate 267, and glutamate 269.

Belongs to the aminoglycoside phosphotransferase family.

Functionally, might catalyze the phosphorylation of aminoglycosides and confer aminoglycoside antibiotics resistance. The chain is Putative aminoglycoside phosphotransferase from Mycobacterium tuberculosis (strain CDC 1551 / Oshkosh).